Consider the following 245-residue polypeptide: Probable phosphatase YcdX (245 aa).

Zn(2+) is bound by residues H7, H9, H15, H40, E73, H101, H131, D192, and H194.

It belongs to the PHP family. Homotrimer. Requires Zn(2+) as cofactor.

The sequence is that of Probable phosphatase YcdX from Salmonella heidelberg (strain SL476).